The primary structure comprises 117 residues: NADH-ubiquinone oxidoreductase chain 3 (117 aa).

A run of 3 helical transmembrane segments spans residues 1–21 (MLMLSIMATIIFIITIVVMML), 57–77 (FFLIAIIFLIFDVEIALLLPM), and 86–106 (LMNWTMTSFFFIFILLIGLYH).

It belongs to the complex I subunit 3 family.

The protein localises to the mitochondrion membrane. The catalysed reaction is a ubiquinone + NADH + 5 H(+)(in) = a ubiquinol + NAD(+) + 4 H(+)(out). Functionally, core subunit of the mitochondrial membrane respiratory chain NADH dehydrogenase (Complex I) that is believed to belong to the minimal assembly required for catalysis. Complex I functions in the transfer of electrons from NADH to the respiratory chain. The immediate electron acceptor for the enzyme is believed to be ubiquinone. In Anopheles quadrimaculatus (Common malaria mosquito), this protein is NADH-ubiquinone oxidoreductase chain 3 (ND3).